Here is a 950-residue protein sequence, read N- to C-terminus: 2-oxoglutarate dehydrogenase E1 component (950 aa).

Belongs to the alpha-ketoglutarate dehydrogenase family. As to quaternary structure, homodimer. Part of the 2-oxoglutarate dehydrogenase (OGDH) complex composed of E1 (2-oxoglutarate dehydrogenase), E2 (dihydrolipoamide succinyltransferase) and E3 (dihydrolipoamide dehydrogenase); the complex contains multiple copies of the three enzymatic components (E1, E2 and E3). Requires thiamine diphosphate as cofactor.

The enzyme catalyses N(6)-[(R)-lipoyl]-L-lysyl-[protein] + 2-oxoglutarate + H(+) = N(6)-[(R)-S(8)-succinyldihydrolipoyl]-L-lysyl-[protein] + CO2. Functionally, E1 component of the 2-oxoglutarate dehydrogenase (OGDH) complex which catalyzes the decarboxylation of 2-oxoglutarate, the first step in the conversion of 2-oxoglutarate to succinyl-CoA and CO(2). In Geobacillus kaustophilus (strain HTA426), this protein is 2-oxoglutarate dehydrogenase E1 component.